A 41-amino-acid polypeptide reads, in one-letter code: Large ribosomal subunit protein bL36 (41 aa).

Belongs to the bacterial ribosomal protein bL36 family.

The polypeptide is Large ribosomal subunit protein bL36 (Nitrobacter hamburgensis (strain DSM 10229 / NCIMB 13809 / X14)).